The sequence spans 581 residues: Intermediate filament protein ifa-2 (581 aa).

Disordered regions lie at residues 1 to 35 and 47 to 68; these read MTDPDSYRSSITSRPSFNRTVTSSSQNYGAPGSGN and SSVSSGLSPYGQNAASTIRDNR. The head stretch occupies residues 1–74; the sequence is MTDPDSYRSS…RDNREREKKE (74 aa). The span at 7–28 shows a compositional bias: polar residues; that stretch reads YRSSITSRPSFNRTVTSSSQNY. Positions 71–424 constitute an IF rod domain; it reads EKKEIMELND…QMLEGNSEGN (354 aa). Positions 75–106 are coil 1A; sequence IMELNDRLASYIEKVRFLDAQNRKLDADLKML. The linker 1 stretch occupies residues 107–120; sequence QGRFGKSTGSVKVM. Residues 121–258 are coil 1B; sequence YEMEITTATN…RGFETELKEL (138 aa). A linker 12 region spans residues 259-276; the sequence is QAQAARDTTSENREYFKN. The coil 2 stretch occupies residues 277–424; the sequence is ELANAMRDIR…QMLEGNSEGN (148 aa). The tail stretch occupies residues 425–578; sequence GLRQLVEKVV…THIQRQSQQT (154 aa). Positions 449 to 469 are disordered; the sequence is RVVKGEHSSRTSYQRSAKGNV. The 118-residue stretch at 457 to 574 folds into the LTD domain; sequence SRTSYQRSAK…EERATHIQRQ (118 aa).

Belongs to the intermediate filament family. As to quaternary structure, forms some heteromeric filaments with ifb-1. Mainly expressed in regions of the hypodermis adjacent to muscle. Expressed in longitudinal stripes where the mechanosensory neurons interface with the hypodermis. Also expressed to the uterine seam and within the uterine-vulval cells.

The protein localises to the cell junction. It localises to the hemidesmosome. In terms of biological role, cytoplasmic intermediate filaments provide mechanical strength to cells. Essential protein, involved in attachment structures in epidermal cells that connect muscles to the external cuticle. Probably acts by forming hypodermal hemidesmosome complexes that help mediate muscle-cuticle force transduction. Although expressed during embryogenesis, it is not required for embryonic development of muscle-cuticle linkages nor for the localization of other proteins to the hemidesmosomes in embryos. This Caenorhabditis elegans protein is Intermediate filament protein ifa-2.